The chain runs to 46 residues: Protein PsbN (46 aa).

The chain crosses the membrane as a helical span at residues 10–30 (IAITILIVLLGLTAFGVYTAF).

This sequence belongs to the PsbN family.

It is found in the cellular thylakoid membrane. Functionally, may play a role in photosystem I and II biogenesis. In Prochlorococcus marinus (strain SARG / CCMP1375 / SS120), this protein is Protein PsbN.